The primary structure comprises 363 residues: Probable butyrate kinase (363 aa).

Belongs to the acetokinase family.

It is found in the cytoplasm. It carries out the reaction butanoate + ATP = butanoyl phosphate + ADP. This chain is Probable butyrate kinase, found in Maridesulfovibrio salexigens (strain ATCC 14822 / DSM 2638 / NCIMB 8403 / VKM B-1763) (Desulfovibrio salexigens).